The following is a 458-amino-acid chain: Succinate-semialdehyde dehydrogenase [NADP(+)] 1 (458 aa).

Residues 134-135, 158-161, and 210-211 contribute to the NADP(+) site; these read WN, KHAS, and GS. E232 serves as the catalytic Proton acceptor. L233 provides a ligand contact to NADP(+). The active-site Nucleophile is C266. NADP(+) is bound at residue E363.

This sequence belongs to the aldehyde dehydrogenase family.

The enzyme catalyses succinate semialdehyde + NADP(+) + H2O = succinate + NADPH + 2 H(+). In terms of biological role, catalyzes the NADP(+)-dependent oxidation of succinate semialdehyde to succinate. It is believed to be the main source of succinate semialdehyde dehydrogenase activity in Mycobacterium. The chain is Succinate-semialdehyde dehydrogenase [NADP(+)] 1 (gabD1) from Mycobacterium ulcerans (strain Agy99).